A 504-amino-acid polypeptide reads, in one-letter code: MIFKAVRVPFKSGRFAVILNEEDASELGVREGDRVRVRYGKAGVVATVQITREIVEKGFVGLTDLASMELGISDGAEVDVFPSPKPKSVELIKKKTRGEKLSQDEIRRIVEDITNNALSEVELTAFVISSMLRGMDFDEIEWLTRSMIETGERIEFDRGTVVDKHSIGGVPGNKISLLIVPTVAAAGLLIPKTASRAITSASGTADTMEVLANVNLSVDEIKEITERVGGVIAWGGATNIAPADDKIIRVEHPLSIDPRPQLLASVMAKKGSVGAKHVVIDIPVGEGAKIEKVEVGRSLANDFIELGRRLGLNVMAAITYGGQPVGRAIGPALEAREALKTMEDRRGPSSLVEKSLGIAGILFEMTGIATNGYQHARKIFESGKTLEKFREIVAAQGGDESVKAEDVAVGDKTYTLTSQVEGAVVSVNNKSIVKIARTAGAPKDKGAGVYVHKKRGEVVKVGDPLLTIYAEKEWKLDNAIEVANTERPIVVSGMVLEVYGRRGV.

Residues G169, 195–200 (SRAITS), and T204 contribute to the AMP site. The active-site Proton donor is D257. The AMP site is built by S265 and K289.

The protein belongs to the thymidine/pyrimidine-nucleoside phosphorylase family. Type 2 subfamily.

It carries out the reaction AMP + phosphate = alpha-D-ribose 1,5-bisphosphate + adenine. The catalysed reaction is CMP + phosphate = cytosine + alpha-D-ribose 1,5-bisphosphate. The enzyme catalyses UMP + phosphate = alpha-D-ribose 1,5-bisphosphate + uracil. Its function is as follows. Catalyzes the conversion of AMP and phosphate to adenine and ribose 1,5-bisphosphate (R15P). Exhibits phosphorylase activity toward CMP and UMP in addition to AMP. Functions in an archaeal AMP degradation pathway, together with R15P isomerase and RubisCO. The polypeptide is AMP phosphorylase 1 (Archaeoglobus fulgidus (strain ATCC 49558 / DSM 4304 / JCM 9628 / NBRC 100126 / VC-16)).